An 89-amino-acid polypeptide reads, in one-letter code: Envelope protein US9 (89 aa).

Residues 1–10 show a composition bias toward basic and acidic residues; that stretch reads MTSRPADQDS. The segment at 1–21 is disordered; that stretch reads MTSRPADQDSVRSSASVPLYP. Over 1–66 the chain is Intravirion; sequence MTSRPADQDS…RRRRTRCVGL (66 aa). Residues 20–23 carry the Internalization motif motif; sequence YPAA. The tract at residues 29–38 is acidic; it reads EAYYSESEDE. Residues Ser-33 and Ser-35 each carry the phosphoserine; by host CK2 modification. Residues 67–87 traverse the membrane as a helical; Signal-anchor for type II membrane protein segment; sequence VIACLVVALLSGGFGALLVWL. The Virion surface portion of the chain corresponds to 88–89; that stretch reads LR.

The protein belongs to the alphaherpesvirinae envelope protein US9 family. In terms of processing, phosphorylated on serines within the acidic cluster, possibly by host CK2. Phosphorylation determines whether endocytosed viral US9 traffics to the trans-Golgi network or recycles to the cell membrane.

The protein localises to the virion membrane. Its subcellular location is the host Golgi apparatus membrane. It is found in the host smooth endoplasmic reticulum membrane. The protein resides in the host cell membrane. Its function is as follows. Essential for the anterograde spread of the infection throughout the host nervous system. Together with the gE/gI heterodimer, US9 is involved in the sorting and transport of viral structural components toward axon tips. The protein is Envelope protein US9 of Homo sapiens (Human).